The sequence spans 341 residues: Methionine import ATP-binding protein MetN 2 (341 aa).

The 240-residue stretch at I2 to V241 folds into the ABC transporter domain. G38–S45 contributes to the ATP binding site.

It belongs to the ABC transporter superfamily. Methionine importer (TC 3.A.1.24) family. As to quaternary structure, the complex is composed of two ATP-binding proteins (MetN), two transmembrane proteins (MetI) and a solute-binding protein (MetQ).

Its subcellular location is the cell membrane. The catalysed reaction is L-methionine(out) + ATP + H2O = L-methionine(in) + ADP + phosphate + H(+). It carries out the reaction D-methionine(out) + ATP + H2O = D-methionine(in) + ADP + phosphate + H(+). Its function is as follows. Part of the ABC transporter complex MetNIQ involved in methionine import. Responsible for energy coupling to the transport system. The polypeptide is Methionine import ATP-binding protein MetN 2 (Staphylococcus epidermidis (strain ATCC 35984 / DSM 28319 / BCRC 17069 / CCUG 31568 / BM 3577 / RP62A)).